The sequence spans 405 residues: Phosphoglycerate kinase (405 aa).

Substrate-binding positions include 24–26 (DFN), Arg-40, 63–66 (HLGR), Arg-122, and Arg-162. Residues Lys-212, Glu-331, and 361–364 (GGDS) contribute to the ATP site.

Belongs to the phosphoglycerate kinase family. Monomer.

Its subcellular location is the cytoplasm. It carries out the reaction (2R)-3-phosphoglycerate + ATP = (2R)-3-phospho-glyceroyl phosphate + ADP. The protein operates within carbohydrate degradation; glycolysis; pyruvate from D-glyceraldehyde 3-phosphate: step 2/5. The chain is Phosphoglycerate kinase (pgk) from Corynebacterium glutamicum (strain ATCC 13032 / DSM 20300 / JCM 1318 / BCRC 11384 / CCUG 27702 / LMG 3730 / NBRC 12168 / NCIMB 10025 / NRRL B-2784 / 534).